The chain runs to 198 residues: Na(+)-translocating NADH-quinone reductase subunit E (198 aa).

The next 6 helical transmembrane spans lie at 11 to 31, 35 to 55, 77 to 97, 110 to 130, 140 to 160, and 176 to 196; these read SVFI…FLAV, VSTA…AVPV, FLNF…LEMI, GIFL…SFMV, VVYG…LAGL, and LGIT…FSGI.

It belongs to the NqrDE/RnfAE family. As to quaternary structure, composed of six subunits; NqrA, NqrB, NqrC, NqrD, NqrE and NqrF.

It is found in the cell inner membrane. The catalysed reaction is a ubiquinone + n Na(+)(in) + NADH + H(+) = a ubiquinol + n Na(+)(out) + NAD(+). NQR complex catalyzes the reduction of ubiquinone-1 to ubiquinol by two successive reactions, coupled with the transport of Na(+) ions from the cytoplasm to the periplasm. NqrA to NqrE are probably involved in the second step, the conversion of ubisemiquinone to ubiquinol. This Haemophilus ducreyi (strain 35000HP / ATCC 700724) protein is Na(+)-translocating NADH-quinone reductase subunit E.